We begin with the raw amino-acid sequence, 524 residues long: Cytochrome P450 monooxygenase patH (524 aa).

The Cytoplasmic portion of the chain corresponds to 1–4 (MEPM). Residues 5–23 (LLLILVAAVVLLFVRWAFV) traverse the membrane as a helical segment. The Lumenal segment spans residues 24-524 (YGHRTSNMPK…KEVFSQFTEG (501 aa)). Asn191 carries an N-linked (GlcNAc...) asparagine glycan. Residue Cys442 participates in heme binding. Asn499 carries N-linked (GlcNAc...) asparagine glycosylation.

Belongs to the cytochrome P450 family. Requires heme as cofactor.

The protein resides in the endoplasmic reticulum membrane. The enzyme catalyses 3-methylphenol + reduced [NADPH--hemoprotein reductase] + O2 = 3-hydroxybenzyl alcohol + oxidized [NADPH--hemoprotein reductase] + H2O + H(+). The protein operates within mycotoxin biosynthesis; patulin biosynthesis. Cytochrome P450 monooxygenase; part of the gene cluster that mediates the biosynthesis of patulin, an acetate-derived tetraketide mycotoxin produced by several fungal species that shows antimicrobial properties against several bacteria. PatH catalyzes the conversion of m-cresol into m-hydroxybenzyl alcohol. The pathway begins with the synthesis of 6-methylsalicylic acid by the polyketide synthase (PKS) patK via condensation of acetate and malonate units. The 6-methylsalicylic acid decarboxylase patG then catalyzes the decarboxylation of 6-methylsalicylic acid to yield m-cresol (also known as 3-methylphenol). These first reactions occur in the cytosol. The intermediate m-cresol is then transported into the endoplasmic reticulum where the cytochrome P450 monooxygenase patH converts it to m-hydroxybenzyl alcohol, which is further converted to gentisyl alcohol by the cytochrome P450 monooxygenase patI. The oxidoreductases patJ and patO further convert gentisyl alcohol to isoepoxydon in the vacuole. PatN catalyzes then the transformation of isoepoxydon into phyllostine. The cluster protein patF is responsible for the conversion from phyllostine to neopatulin whereas the alcohol dehydrogenase patD converts neopatulin to E-ascladiol. The steps between isoepoxydon and E-ascladiol occur in the cytosol, and E-ascladiol is probably secreted to the extracellular space by one of the cluster-specific transporters patC or patM. Finally, the secreted patulin synthase patE catalyzes the conversion of E-ascladiol to patulin. This chain is Cytochrome P450 monooxygenase patH, found in Aspergillus clavatus (strain ATCC 1007 / CBS 513.65 / DSM 816 / NCTC 3887 / NRRL 1 / QM 1276 / 107).